The sequence spans 183 residues: Small ribosomal subunit protein uS4 (183 aa).

The S4 RNA-binding domain occupies 106–168 (RRLQTQVYRQ…AGSPLAREGH (63 aa)).

The protein belongs to the universal ribosomal protein uS4 family. Part of the 30S ribosomal subunit. Contacts protein S5. The interaction surface between S4 and S5 is involved in control of translational fidelity.

Functionally, one of the primary rRNA binding proteins, it binds directly to 16S rRNA where it nucleates assembly of the body of the 30S subunit. In terms of biological role, with S5 and S12 plays an important role in translational accuracy. The sequence is that of Small ribosomal subunit protein uS4 from Methanothrix thermoacetophila (strain DSM 6194 / JCM 14653 / NBRC 101360 / PT) (Methanosaeta thermophila).